Here is a 129-residue protein sequence, read N- to C-terminus: Large ribosomal subunit protein uL22 (129 aa).

Belongs to the universal ribosomal protein uL22 family. In terms of assembly, part of the 50S ribosomal subunit.

Functionally, this protein binds specifically to 23S rRNA; its binding is stimulated by other ribosomal proteins, e.g. L4, L17, and L20. It is important during the early stages of 50S assembly. It makes multiple contacts with different domains of the 23S rRNA in the assembled 50S subunit and ribosome. The globular domain of the protein is located near the polypeptide exit tunnel on the outside of the subunit, while an extended beta-hairpin is found that lines the wall of the exit tunnel in the center of the 70S ribosome. The protein is Large ribosomal subunit protein uL22 of Mesorhizobium japonicum (strain LMG 29417 / CECT 9101 / MAFF 303099) (Mesorhizobium loti (strain MAFF 303099)).